The following is a 580-amino-acid chain: MSPSVSSPQLRHTKSNRAISRIDRTDPLALALQPPANEAPADKYARLHQEKLAKQRSDEIDKFLKQHQEDRATHGLASSPSTSVDGANFKKGRVYKMVLLGQAGAGKTTVLKQMRLLYDPPAHERERRGWTKIVLLNLTSSVRVLLETLSLYHDQRLERKSSELSRLESSTSASTSTSASASSPKHVDTESQPNDATRLELAKQLGTTKKINTSSLPWLTHIPSVVQLERALRTELGAFGEEAVLSASSDEAAITNQKVRTRLDAQGSSSIRGEKSPLVLRPGWQERLFTYARRSLSLTQNGRAAAARRETDGGDSQSESEKDNSETLKLLRAIRPEVLALWNDDAGCRALRKRGLFLDGQSDAATSYFLDNYSRITDAAYRPTDEDILHSRVRTLGVTEDVFRVDRSLIYRIYDVGGSRSQRAAWAPFLDDIESIIFLAPLSAFDQPLVEDCSTNRLADTFTLFNQIVTNPLLEHATMILFLNKIDLLEKKLRQGVQLHKYWPEYVGDNDFEAVWRWFRAKFRDALRRAEDEVNLDQTSRRRLYVHTTVATSTVQIRAILMSVKDSILRENLKLTGLVG.

The segment covering 1 to 10 has biased composition (polar residues); that stretch reads MSPSVSSPQL. A disordered region spans residues 1 to 28; that stretch reads MSPSVSSPQLRHTKSNRAISRIDRTDPL. Residues 93 to 579 form the G-alpha domain; sequence RVYKMVLLGQ…RENLKLTGLV (487 aa). Residues 96–109 are G1 motif; the sequence is KMVLLGQAGAGKTT. GTP is bound at residue 101-108; that stretch reads GQAGAGKT. 2 disordered regions span residues 160–196 and 302–325; these read KSSELSRLESSTSASTSTSASASSPKHVDTESQPNDA and GRAAAARRETDGGDSQSESEKDNS. Over residues 167–183 the composition is skewed to low complexity; it reads LESSTSASTSTSASASS. Positions 387 to 395 are G2 motif; it reads DILHSRVRT. GTP contacts are provided by residues 389-395, 415-419, 484-487, and Ala-551; these read LHSRVRT, DVGGS, and NKID. Residue Thr-395 coordinates Mg(2+). The segment at 411 to 420 is G3 motif; it reads YRIYDVGGSR. The G4 motif stretch occupies residues 480 to 487; sequence ILFLNKID. The interval 549-554 is G5 motif; the sequence is TVATST.

It belongs to the G-alpha family. As to quaternary structure, g proteins are composed of 3 units; alpha, beta and gamma. The alpha chain contains the guanine nucleotide binding site.

Functionally, guanine nucleotide-binding proteins (G proteins) are involved as modulators or transducers in various transmembrane signaling systems. This Mycosarcoma maydis (Corn smut fungus) protein is Guanine nucleotide-binding protein alpha-4 subunit (GPA4).